We begin with the raw amino-acid sequence, 254 residues long: Sulfoacetaldehyde reductase (254 aa).

Residue 8-32 (FITGATSGFGEAAAQVFADAGWSLV) coordinates NADP(+). Ser141 is a substrate binding site. Tyr154 (proton acceptor) is an active-site residue.

This sequence belongs to the short-chain dehydrogenases/reductases (SDR) family. Homodimer and heterotetramer.

The catalysed reaction is 2-hydroxyethane-1-sulfonate + NADP(+) = sulfoacetaldehyde + NADPH + H(+). It participates in organosulfur degradation. Catalyzes the formation of isethionate from 2-sulfoacetaldehyde in the deaminative pathway of taurine. The enzyme is specific for NADPH; NADH is not a substrate. In Klebsiella oxytoca, this protein is Sulfoacetaldehyde reductase (isfD).